A 120-amino-acid polypeptide reads, in one-letter code: Flagellar transcriptional regulator FlhD (120 aa).

Belongs to the FlhD family. In terms of assembly, homodimer; disulfide-linked. Forms a heterohexamer composed of two FlhC and four FlhD subunits. Each FlhC binds a FlhD dimer, forming a heterotrimer, and a hexamer assembles by dimerization of two heterotrimers.

It localises to the cytoplasm. In terms of biological role, functions in complex with FlhC as a master transcriptional regulator that regulates transcription of several flagellar and non-flagellar operons by binding to their promoter region. Activates expression of class 2 flagellar genes, including fliA, which is a flagellum-specific sigma factor that turns on the class 3 genes. Also regulates genes whose products function in a variety of physiological pathways. This Erwinia tasmaniensis (strain DSM 17950 / CFBP 7177 / CIP 109463 / NCPPB 4357 / Et1/99) protein is Flagellar transcriptional regulator FlhD.